Reading from the N-terminus, the 464-residue chain is UDP-N-acetylmuramate--L-alanine ligase (464 aa).

Gly-112–Thr-118 contacts ATP.

Belongs to the MurCDEF family.

It is found in the cytoplasm. The catalysed reaction is UDP-N-acetyl-alpha-D-muramate + L-alanine + ATP = UDP-N-acetyl-alpha-D-muramoyl-L-alanine + ADP + phosphate + H(+). The protein operates within cell wall biogenesis; peptidoglycan biosynthesis. Its function is as follows. Cell wall formation. The sequence is that of UDP-N-acetylmuramate--L-alanine ligase from Acidithiobacillus ferrooxidans (strain ATCC 23270 / DSM 14882 / CIP 104768 / NCIMB 8455) (Ferrobacillus ferrooxidans (strain ATCC 23270)).